Reading from the N-terminus, the 131-residue chain is uncharacterized protein (131 aa).

The region spanning 26–124 (CSVEVAVNEI…WGKMYGSHQE (99 aa)) is the HTH hxlR-type domain.

This is an uncharacterized protein from Methanothermobacter thermautotrophicus (strain ATCC 29096 / DSM 1053 / JCM 10044 / NBRC 100330 / Delta H) (Methanobacterium thermoautotrophicum).